A 626-amino-acid chain; its full sequence is (+)-3-carene synthase 1, chloroplastic (626 aa).

The transit peptide at 1–45 directs the protein to the chloroplast; that stretch reads MSLISAVPLASSCVSKSLISSVREHTALRRAIATLQMSRRGKSVA. Mg(2+) is bound by residues D377, D381, and D529. A DDXXD motif motif is present at residues 377–381; the sequence is DDMYD.

Belongs to the terpene synthase family. Tpsd subfamily. Mg(2+) serves as cofactor. Requires Mn(2+) as cofactor.

The protein localises to the plastid. It is found in the chloroplast. It catalyses the reaction (2E)-geranyl diphosphate = (+)-car-3-ene + diphosphate. The catalysed reaction is (2E)-geranyl diphosphate = terpinolene + diphosphate. It functions in the pathway terpene metabolism; oleoresin biosynthesis. Its pathway is secondary metabolite biosynthesis; terpenoid biosynthesis. Monoterpene synthase (TPS) involved in the biosynthesis of monoterpene natural products included in conifer oleoresin secretions and volatile emissions; these compounds contribute to biotic and abiotic stress defense against herbivores and pathogens. Catalyzes the conversion of (2E)-geranyl diphosphate (GPP) to (+)-car-3-ene and, to a lower extent, to terpinolene. The polypeptide is (+)-3-carene synthase 1, chloroplastic (Pinus contorta (Shore pine)).